The sequence spans 92 residues: C-C motif chemokine 4-like (92 aa).

Positions 1–23 (MKLCVTVLSLLVLVAAFCSLALS) are cleaved as a signal peptide. 2 disulfide bridges follow: cysteine 34/cysteine 58 and cysteine 35/cysteine 74.

The protein belongs to the intercrine beta (chemokine CC) family. In terms of assembly, interacts with CCR5. As to expression, detected in B-cells.

Its subcellular location is the secreted. Functionally, chemokine that induces chemotaxis of cells expressing CCR5 or CCR1. Inhibits HIV replication in peripheral blood monocytes that express CCR5. The sequence is that of C-C motif chemokine 4-like (CCL4L1) from Homo sapiens (Human).